Reading from the N-terminus, the 177-residue chain is Large ribosomal subunit protein uL6 (177 aa).

The protein belongs to the universal ribosomal protein uL6 family. In terms of assembly, part of the 50S ribosomal subunit.

Functionally, this protein binds to the 23S rRNA, and is important in its secondary structure. It is located near the subunit interface in the base of the L7/L12 stalk, and near the tRNA binding site of the peptidyltransferase center. This Cronobacter sakazakii (strain ATCC BAA-894) (Enterobacter sakazakii) protein is Large ribosomal subunit protein uL6.